The primary structure comprises 292 residues: Brix domain-containing protein ZK795.3 (292 aa).

The Brix domain maps to 78–259 (PKIVITTSRD…PYQIKLGTLE (182 aa)).

The chain is Brix domain-containing protein ZK795.3 from Caenorhabditis elegans.